A 502-amino-acid polypeptide reads, in one-letter code: Glutamate--tRNA ligase (502 aa).

The short motif at 12-22 (PSPTGYLHVGG) is the 'HIGH' region element. Positions 259-263 (KLSKR) match the 'KMSKS' region motif. Lysine 262 lines the ATP pocket.

The protein belongs to the class-I aminoacyl-tRNA synthetase family. Glutamate--tRNA ligase type 1 subfamily. As to quaternary structure, monomer.

The protein localises to the cytoplasm. It catalyses the reaction tRNA(Glu) + L-glutamate + ATP = L-glutamyl-tRNA(Glu) + AMP + diphosphate. In terms of biological role, catalyzes the attachment of glutamate to tRNA(Glu) in a two-step reaction: glutamate is first activated by ATP to form Glu-AMP and then transferred to the acceptor end of tRNA(Glu). This chain is Glutamate--tRNA ligase, found in Pelodictyon phaeoclathratiforme (strain DSM 5477 / BU-1).